Consider the following 202-residue polypeptide: Alcohol dehydrogenase-related 31 kDa protein (202 aa).

Position 11-34 (11-34 (YVADCGGIALETSKVLMTKNIAKL)) interacts with NAD(+). Residue Ser-139 coordinates substrate. Tyr-152 functions as the Proton acceptor in the catalytic mechanism.

This sequence belongs to the short-chain dehydrogenases/reductases (SDR) family.

The polypeptide is Alcohol dehydrogenase-related 31 kDa protein (Adhr) (Drosophila erecta (Fruit fly)).